Consider the following 2752-residue polypeptide: Serine/arginine repetitive matrix protein 2 (2752 aa).

An N-acetylmethionine modification is found at methionine 1. The stretch at 60-92 (HERKRRVELRCLELEEMMEEQGYEEQQIQEKVA) forms a coiled coil. Lysine 101 is subject to N6-acetyllysine. Residues lysine 108 and lysine 130 each participate in a glycyl lysine isopeptide (Lys-Gly) (interchain with G-Cter in SUMO2) cross-link. Residues 141–2131 (ISDSYVDGSS…MSPTPLDRCR (1991 aa)) form a disordered region. A Phosphotyrosine modification is found at tyrosine 145. Lysine 169 carries the post-translational modification N6-acetyllysine. The segment covering 175–185 (RESSSSRSPTP) has biased composition (low complexity). Basic residues-rich tracts occupy residues 186-197 (KQKKKKKKKDRG) and 207-249 (RERK…KRSR). Residues 197-259 (GRRSESSSPR…STTPAPKSRR (63 aa)) are sufficient for RNA-binding. Residues serine 220 and serine 222 each carry the phosphoserine modification. Residues 263–290 (STSADSASSSDTSRSRSRSAAAKTHTTA) show a composition bias toward low complexity. At threonine 286 the chain carries Phosphothreonine. Phosphoserine occurs at positions 295, 297, 300, 322, and 323. Positions 313–333 (PGTTSTQRPSSPETATKQPSS) are enriched in polar residues. The span at 335–347 (YEDKDKDKKEKSA) shows a compositional bias: basic and acidic residues. Residues 348–360 (TRPSPSPERSSTG) are compositionally biased toward low complexity. 4 positions are modified to phosphoserine: serine 351, serine 353, serine 357, and serine 358. 2 positions are modified to phosphothreonine: threonine 359 and threonine 367. Serine 377 bears the Phosphoserine mark. Residues 380–398 (PLATTPLSQEPVNPPSEAS) show a composition bias toward polar residues. A phosphothreonine mark is found at threonine 383 and threonine 384. Serine 387, serine 395, serine 398, serine 404, and serine 408 each carry phosphoserine. Positions 399–410 (PTRDRSPPKSPE) are enriched in basic and acidic residues. Low complexity predominate over residues 411 to 421 (KLPQSSSSESS). Serine 424, serine 435, serine 436, serine 437, serine 440, and serine 454 each carry phosphoserine. Basic residues predominate over residues 461–483 (NRSHGRAKRDKSHSHTPSRRMGR). A phosphoserine mark is found at serine 484, serine 486, serine 506, serine 508, serine 510, serine 534, serine 536, and serine 543. Residues 491–536 (KRGRSRSRTPTKRGHSRSRSPQWRRSRSAQRWGRSRSPQRRGRSRS) are compositionally biased toward basic residues. Residues 537 to 546 (PQRPGWSRSR) are compositionally biased toward low complexity. 3 stretches are compositionally biased toward basic residues: residues 547-564 (NTQR…RSHS), 571-723 (GRSR…RRGR), and 732-742 (NKSRTSQRRSR). Phosphoserine occurs at positions 702, 704, and 706. Serine 778, serine 780, and serine 783 each carry phosphoserine. A compositionally biased stretch (low complexity) spans 790–805 (SQTPPRRSRSGSSQPK). Residues 806–816 (AKSRTPPRRSR) are compositionally biased toward basic residues. Residues 828–841 (KTPSRQSHSSSSPH) are compositionally biased toward low complexity. Phosphoserine is present on residues serine 846 and serine 854. Residues 849–869 (PPRQGSITSPQANEQSVTPQR) show a composition bias toward polar residues. Phosphothreonine is present on threonine 856. 2 positions are modified to phosphoserine: serine 857 and serine 864. Residue threonine 866 is modified to Phosphothreonine. 14 positions are modified to phosphoserine: serine 871, serine 875, serine 876, serine 908, serine 935, serine 950, serine 952, serine 954, serine 957, serine 968, serine 970, serine 972, serine 973, and serine 974. 2 stretches are compositionally biased toward low complexity: residues 901-917 (SSTP…SPQP) and 924-945 (SPRQ…TSRT). 2 positions are modified to phosphothreonine: threonine 977 and threonine 983. Phosphoserine is present on residues serine 992 and serine 994. Tyrosine 996 carries the phosphotyrosine modification. Position 1003 is a phosphothreonine (threonine 1003). Over residues 1008–1017 (SLSGSKSPCP) the composition is skewed to low complexity. Phosphoserine occurs at positions 1010, 1014, 1024, 1028, 1032, and 1042. The segment covering 1040 to 1064 (KSSTPPGESYFGVSSLQLKGQSQTS) has biased composition (polar residues). Position 1043 is a phosphothreonine (threonine 1043). Tyrosine 1049 is subject to Phosphotyrosine. Residues serine 1064, serine 1069, serine 1072, serine 1073, serine 1083, serine 1099, serine 1101, serine 1102, and serine 1103 each carry the phosphoserine modification. The segment covering 1071–1092 (TSSPEVRQSHSESPSLQSKSQT) has biased composition (polar residues). Residues 1093-1104 (SPKGGRSRSSSP) are compositionally biased toward low complexity. Phosphothreonine is present on threonine 1106. Residues serine 1112, serine 1122, serine 1124, serine 1129, serine 1132, serine 1152, serine 1179, serine 1188, and serine 1198 each carry the phosphoserine modification. Over residues 1132–1159 (SPEQSRFQSDSSSYPTVDSNSLLGQSRL) the composition is skewed to polar residues. The segment covering 1204–1214 (DTLRTPPRERS) has biased composition (basic and acidic residues). A Phosphothreonine modification is found at threonine 1208. A phosphoserine mark is found at serine 1214, serine 1219, serine 1227, serine 1254, serine 1257, serine 1258, serine 1266, serine 1270, and serine 1271. Residues 1216-1233 (AGSSPETKEQNSALPTSS) show a composition bias toward polar residues. The span at 1283-1292 (TLDQSQSQAS) shows a compositional bias: polar residues. Phosphoserine is present on residues serine 1311, serine 1318, serine 1320, serine 1326, serine 1329, serine 1336, serine 1348, serine 1368, serine 1382, serine 1383, serine 1384, serine 1387, serine 1401, serine 1403, and serine 1404. Polar residues predominate over residues 1318–1328 (SNSPLRENSFG). The segment covering 1376 to 1386 (TRSSGHSSSEL) has biased composition (polar residues). Threonine 1413 is modified (phosphothreonine). 4 positions are modified to phosphoserine: serine 1415, serine 1421, serine 1423, and serine 1424. Threonine 1434 is subject to Phosphothreonine. Over residues 1441–1452 (SGSSPGLRDGSG) the composition is skewed to low complexity. Phosphoserine is present on residues serine 1444 and serine 1451. The residue at position 1453 (threonine 1453) is a Phosphothreonine. Residues 1453–1463 (TPSRHSLSGSS) show a composition bias toward polar residues. Serine 1458, serine 1460, serine 1462, and serine 1463 each carry phosphoserine. At threonine 1472 the chain carries Phosphothreonine. 2 positions are modified to phosphoserine: serine 1482 and serine 1483. Threonine 1492 bears the Phosphothreonine mark. A phosphoserine mark is found at serine 1497, serine 1499, serine 1501, and serine 1502. Threonine 1511 is subject to Phosphothreonine. 4 positions are modified to phosphoserine: serine 1517, serine 1519, serine 1521, and serine 1522. Threonine 1531 is modified (phosphothreonine). The span at 1534–1544 (GQRSRSGSSQE) shows a compositional bias: polar residues. Phosphoserine is present on residues serine 1537, serine 1539, serine 1541, serine 1542, and serine 1552. Residues 1555 to 1567 (ERSESDSSPDSKA) are compositionally biased toward basic and acidic residues. The span at 1568–1577 (KTRTPLRQRS) shows a compositional bias: basic residues. Phosphoserine occurs at positions 1577, 1579, 1581, 1582, 1598, 1600, 1601, 1616, 1620, 1621, 1648, 1658, 1691, 1693, and 1694. Positions 1638–1657 (SGSSSKGRGPSPEGSSSTES) are enriched in low complexity. Residues 1681 to 1691 (KSRTPPRRRSS) are compositionally biased toward basic residues. Phosphothreonine is present on threonine 1698. A phosphoserine mark is found at serine 1727, serine 1729, serine 1731, serine 1732, serine 1762, and serine 1764. Composition is skewed to basic residues over residues 1769–1789 (GLQR…RRRD) and 1798–1816 (SRRR…RRRG). Serine 1818, serine 1822, serine 1854, serine 1857, serine 1876, and serine 1878 each carry phosphoserine. Residues 1834–1854 (SSRRRRGRSRTPPTSRKRSRS) are compositionally biased toward basic residues. The segment covering 1862–2068 (KRSRSRASPA…PRTARGKRSL (207 aa)) has biased composition (basic residues). Residue threonine 1880 is modified to Phosphothreonine. Phosphoserine occurs at positions 1884 and 1890. Threonine 1892 carries the phosphothreonine modification. Residues serine 1893, serine 1916, serine 1919, serine 1923, and serine 1925 each carry the phosphoserine modification. A phosphothreonine mark is found at threonine 1927 and threonine 1931. A phosphoserine mark is found at serine 1946 and serine 1948. Residues threonine 1950 and threonine 1954 each carry the phosphothreonine modification. A phosphoserine mark is found at serine 1958 and serine 1960. Phosphothreonine is present on residues threonine 1962 and threonine 1966. Serine 1970, serine 1972, and serine 1975 each carry phosphoserine. Threonine 1978 carries the post-translational modification Phosphothreonine. 8 positions are modified to phosphoserine: serine 1984, serine 1987, serine 1996, serine 1999, serine 2008, serine 2011, serine 2018, and serine 2020. A Phosphothreonine modification is found at threonine 2022. Residues serine 2030 and serine 2032 each carry the phosphoserine modification. Threonine 2034 carries the post-translational modification Phosphothreonine. A phosphoserine mark is found at serine 2042, serine 2044, serine 2046, and serine 2067. A Phosphothreonine modification is found at threonine 2069. The span at 2070-2095 (RSPPAIRRRSASGSSSDRSRSATPPA) shows a compositional bias: low complexity. Serine 2071 and serine 2090 each carry phosphoserine. At threonine 2092 the chain carries Phosphothreonine. Polar residues predominate over residues 2097-2124 (RNHSGSRTPPVALNSSRMSCFSRPSMSP). Serine 2100 and serine 2102 each carry phosphoserine. Threonine 2104 is subject to Phosphothreonine. Residues serine 2118, serine 2121, serine 2123, and serine 2132 each carry the phosphoserine modification. Threonine 2144 carries the post-translational modification Phosphothreonine. An omega-N-methylarginine mark is found at arginine 2194, arginine 2207, arginine 2231, and arginine 2246. Phosphoserine is present on serine 2272. Residues arginine 2274 and arginine 2288 each carry the omega-N-methylarginine modification. Threonine 2289, threonine 2291, and threonine 2302 each carry phosphothreonine. The residue at position 2310 (serine 2310) is a Phosphoserine. A disordered region spans residues 2311–2342 (LTGSGTPPTAANYPSSSRTPQAPASANLVGPR). A phosphothreonine mark is found at threonine 2316 and threonine 2329. Positions 2317–2334 (PPTAANYPSSSRTPQAPA) are enriched in polar residues. Position 2335 is a phosphoserine (serine 2335). Arginine 2342 carries the omega-N-methylarginine modification. Serine 2343, serine 2368, and serine 2376 each carry phosphoserine. Threonine 2381 is subject to Phosphothreonine. Serine 2382 carries the phosphoserine modification. Position 2384 is an asymmetric dimethylarginine; alternate (arginine 2384). Arginine 2384 is modified (omega-N-methylarginine; alternate). Residues 2389-2752 (AYERVSGRTS…PMRHRSSRSP (364 aa)) form a disordered region. Residues serine 2394, serine 2398, and serine 2407 each carry the phosphoserine modification. Threonine 2409 carries the phosphothreonine modification. Residues serine 2412, serine 2415, serine 2426, serine 2429, serine 2449, and serine 2453 each carry the phosphoserine modification. Over residues 2426 to 2439 (SPSSRMGQAPSQSL) the composition is skewed to polar residues. The segment covering 2455–2473 (FSDQSRCLIAQTTPVAGSQ) has biased composition (polar residues). Low complexity-rich tracts occupy residues 2474–2487 (SLSS…TSSA), 2515–2526 (AQQPSALAALQP), and 2533–2567 (SSSS…EGSS). Serine 2581 bears the Phosphoserine mark. The residue at position 2583 (threonine 2583) is a Phosphothreonine. A Glycyl lysine isopeptide (Lys-Gly) (interchain with G-Cter in SUMO2) cross-link involves residue lysine 2587. At threonine 2599 the chain carries Phosphothreonine. The segment covering 2608–2648 (SSSSSSSSSSSSSSSSSSSSSSSSSSSSSSSSSSSSSSSSS) has biased composition (low complexity). Over residues 2651–2668 (PAKPGPQALPKPASPKKP) the composition is skewed to pro residues. A phosphoserine mark is found at serine 2664, serine 2675, serine 2677, serine 2684, serine 2688, serine 2690, serine 2692, serine 2694, serine 2702, and serine 2706. Residues 2669–2689 (PPGERRSRSPRKPIDSLRDSR) show a composition bias toward basic and acidic residues. Positions 2707-2716 (PRDQQSSSSE) are enriched in low complexity. Residues 2717–2729 (RGSRRGQRGDSRS) are compositionally biased toward basic and acidic residues. Position 2738 is a phosphothreonine (threonine 2738). At serine 2740 the chain carries Phosphoserine. A compositionally biased stretch (basic residues) spans 2743–2752 (PMRHRSSRSP).

Belongs to the CWC21 family. As to quaternary structure, component of pre-catalytic, catalytic and post-catalytic spliceosome complexes. Found in a pre-mRNA splicing complex with SFRS4, SFRS5, SNRP70, SNRPA1, SRRM1 and SRRM2. Component of the minor spliceosome, which splices U12-type introns. Interacts with DHX8. Interacts with CACTIN. Expressed in liver, placenta, and white blood cells.

The protein localises to the nucleus. Its subcellular location is the nucleus speckle. In terms of biological role, required for pre-mRNA splicing as component of the spliceosome. As a component of the minor spliceosome, involved in the splicing of U12-type introns in pre-mRNAs. This Homo sapiens (Human) protein is Serine/arginine repetitive matrix protein 2 (SRRM2).